The sequence spans 604 residues: Probable translation initiation factor IF-2 (604 aa).

Positions Ile18–Met232 constitute a tr-type G domain. A G1 region spans residues Gly27–Thr34. Gly27–Thr34 serves as a coordination point for GTP. The segment at Ala52–His56 is G2. Residues Asp88–Gly91 are G3. GTP-binding positions include Asp88–His92 and Thr142–Asp145. The interval Thr142–Asp145 is G4. The G5 stretch occupies residues Ser210–His212.

The protein belongs to the TRAFAC class translation factor GTPase superfamily. Classic translation factor GTPase family. IF-2 subfamily.

Its function is as follows. Function in general translation initiation by promoting the binding of the formylmethionine-tRNA to ribosomes. Seems to function along with eIF-2. The polypeptide is Probable translation initiation factor IF-2 (Methanospirillum hungatei JF-1 (strain ATCC 27890 / DSM 864 / NBRC 100397 / JF-1)).